Here is a 205-residue protein sequence, read N- to C-terminus: MIYLDFINQQTTQTAKALLGVKIIYQDDYQTYTGYIVETEAYLGIQDKAAHGFGGKITPKVTSLYKKGGTIYAHVMHTHLLINFVTRTEGIPEGVLIRAIEPDEGIGAMNVNRGKSGYELTNGPGKWTKAFNIPRSIDGSTLNDCKLSIDTNHRKYPKTIIESGRIGIPNKGEWTNKPLRFTVKGNPYVSRMRKSDFQNPDDTWK.

Belongs to the DNA glycosylase MPG family.

This is Putative 3-methyladenine DNA glycosylase from Staphylococcus epidermidis (strain ATCC 35984 / DSM 28319 / BCRC 17069 / CCUG 31568 / BM 3577 / RP62A).